A 266-amino-acid polypeptide reads, in one-letter code: Small ribosomal subunit protein eS1 (266 aa).

A disordered region spans residues 233–266 (GEGGGSSAAKPSGDDTGAKVDRADGYEPPIQETV). Residues 244–257 (SGDDTGAKVDRADG) show a composition bias toward basic and acidic residues.

Belongs to the eukaryotic ribosomal protein eS1 family. In terms of assembly, component of the small ribosomal subunit. Mature ribosomes consist of a small (40S) and a large (60S) subunit. The 40S subunit contains about 33 different proteins and 1 molecule of RNA (18S). The 60S subunit contains about 49 different proteins and 3 molecules of RNA (28S, 5.8S and 5S). Part of the small subunit (SSU) processome, composed of more than 70 proteins and the RNA chaperone small nucleolar RNA (snoRNA) U3.

The protein localises to the cytoplasm. Its subcellular location is the nucleus. It is found in the nucleolus. Its function is as follows. Component of the small ribosomal subunit. The ribosome is a large ribonucleoprotein complex responsible for the synthesis of proteins in the cell. Part of the small subunit (SSU) processome, first precursor of the small eukaryotic ribosomal subunit. During the assembly of the SSU processome in the nucleolus, many ribosome biogenesis factors, an RNA chaperone and ribosomal proteins associate with the nascent pre-rRNA and work in concert to generate RNA folding, modifications, rearrangements and cleavage as well as targeted degradation of pre-ribosomal RNA by the RNA exosome. May play a role during erythropoiesis. This is Small ribosomal subunit protein eS1 (rps3a) from Salmo salar (Atlantic salmon).